A 205-amino-acid chain; its full sequence is Small ribosomal subunit protein uS5 (205 aa).

Positions 49 to 112 (LVDEVLCIDM…TNAKLNIVKV (64 aa)) constitute an S5 DRBM domain.

The protein belongs to the universal ribosomal protein uS5 family. Part of the 30S ribosomal subunit. Contacts protein S4.

Its function is as follows. With S4 and S12 plays an important role in translational accuracy. This is Small ribosomal subunit protein uS5 from Methanocorpusculum labreanum (strain ATCC 43576 / DSM 4855 / Z).